A 237-amino-acid chain; its full sequence is MSGDAPTPAHDPAAEGLEASVPLESVASMNSDEGQPSAQSAPLADNEARLQQLEQEHSSLREEHETLRSQYMRIAADFDNFRKRQSRDQDDLRLQLICTTLSEILPVVDNFERARQQLEPQGEEAQALHRSYQGLYKQLVEVLKQLGVASMRVVGQAFDPTLHEAVSREPSEEHPEDVVTEELQRGYHLNGRVLRHALVKVSMGPGPQSGASPSSAQSNDDSTATFQGEADPAEPGV.

2 disordered regions span residues 1-52 (MSGD…RLQQ) and 200-237 (KVSMGPGPQSGASPSSAQSNDDSTATFQGEADPAEPGV). The span at 27-40 (ASMNSDEGQPSAQS) shows a compositional bias: polar residues. Residues 204 to 218 (GPGPQSGASPSSAQS) show a composition bias toward low complexity.

Belongs to the GrpE family. Homodimer.

It is found in the cytoplasm. Functionally, participates actively in the response to hyperosmotic and heat shock by preventing the aggregation of stress-denatured proteins, in association with DnaK and GrpE. It is the nucleotide exchange factor for DnaK and may function as a thermosensor. Unfolded proteins bind initially to DnaJ; upon interaction with the DnaJ-bound protein, DnaK hydrolyzes its bound ATP, resulting in the formation of a stable complex. GrpE releases ADP from DnaK; ATP binding to DnaK triggers the release of the substrate protein, thus completing the reaction cycle. Several rounds of ATP-dependent interactions between DnaJ, DnaK and GrpE are required for fully efficient folding. The protein is Protein GrpE of Prochlorococcus marinus (strain MIT 9303).